A 147-amino-acid chain; its full sequence is 6-pyruvoyl tetrahydrobiopterin synthase (147 aa).

A Zn(2+)-binding site is contributed by H26. The active-site Proton acceptor is the C45. 2 residues coordinate Zn(2+): H51 and H53. Active-site charge relay system residues include H92 and E136.

The protein belongs to the PTPS family. In terms of assembly, homohexamer formed of two homotrimers in a head to head fashion. Zn(2+) is required as a cofactor.

It carries out the reaction 7,8-dihydroneopterin 3'-triphosphate = 6-pyruvoyl-5,6,7,8-tetrahydropterin + triphosphate + H(+). The protein operates within cofactor biosynthesis; tetrahydrobiopterin biosynthesis; tetrahydrobiopterin from 7,8-dihydroneopterin triphosphate: step 1/3. Functionally, involved in the biosynthesis of tetrahydrobiopterin, an essential cofactor of aromatic amino acid hydroxylases. Catalyzes the transformation of 7,8-dihydroneopterin triphosphate into 6-pyruvoyl tetrahydropterin. The protein is 6-pyruvoyl tetrahydrobiopterin synthase (pts) of Poecilia reticulata (Guppy).